The following is a 540-amino-acid chain: Keratin, type II cytoskeletal 73 (540 aa).

The head stretch occupies residues 1-131 (MSRQFTYKSG…DPEIQKVCAQ (131 aa)). Residues 132–167 (EREQIKALNNKFASFIDKVRFLEQQNQVLGTKWELL) are coil 1A. The 314-residue stretch at 132–445 (EREQIKALNN…KLLEGEECRM (314 aa)) folds into the IF rod domain. The tract at residues 168 to 186 (QQQDLDNCKNNLEPILEGY) is linker 1. Residues 187–278 (ISNLRKQLEM…CLYEGEIAQM (92 aa)) are coil 1B. The segment at 279-302 (QSHISDTSVILSMDNNRNLDLNSI) is linker 12. Residues 303–441 (IAEVRAQYED…ATYRKLLEGE (139 aa)) form a coil 2 region. A tail region spans residues 442–540 (ECRMSGEYTN…LSSPTKKTPR (99 aa)). Positions 509 to 540 (GEAKTRLGSTSEIKDLLGKTPALSSPTKKTPR) are disordered. Positions 530–540 (ALSSPTKKTPR) are enriched in polar residues.

The protein belongs to the intermediate filament family. As to quaternary structure, heterotetramer of two type I and two type II keratins.

Its function is as follows. Has a role in hair formation. Specific component of keratin intermediate filaments in the inner root sheath (IRS) of the hair follicle. This chain is Keratin, type II cytoskeletal 73 (KRT73), found in Bos taurus (Bovine).